Reading from the N-terminus, the 565-residue chain is MSSQRRNYRFILVVTLFVLASLAVSGRLVYLQVHDHEFLADQGDLRSIRDLPIPVTRGMITDRNGEPLAVSTEVASIWCNPREMAAHLDEVPRLAGALHRPAAALLAQLQANPNKRFLYLERGLSPIEASEVMALGITGVHQIKEYKRFYPSSELTAQLIGLVNIDGRGQEGTELGFNDWLSGKDGVREVAINPRGSLVNSIKVLKTPKASQDVALSIDLRLQFIAYKALEKAVLKFGAHSGSAVLVNPKSGQILAMANFPSYNPNNRASFAPAFMRNRTLTDTFEPGSVIKPFSMSAALASGKFDENSQVSVAPGWMTIDGHTIHDVARRDVLTMTGVLINSSNIGMSKVALQIGPKPILEQLGRVGFGAPLSLGFPGENPGYLPFHEKWSNIATASMSFGYSLAVNTAELAQAYSVFANDGKLVPLSLLRDNPQNQVRQAMDPQIARRIRAMLQTVVEDPKGVVRARVPGYHVAGKSGTARKASGRGYADKSYRSLFVGMAPASDPQLVLAVMIDSPTRIGYFGGLVSAPTFSDIMAGSLRALAIPPDNLQDSPAVADRQHHG.

The helical transmembrane segment at 10–30 (FILVVTLFVLASLAVSGRLVY) threads the bilayer. Residue S289 is the Acyl-ester intermediate of the active site.

The protein belongs to the transpeptidase family. FtsI subfamily.

The protein localises to the cell inner membrane. The enzyme catalyses Preferential cleavage: (Ac)2-L-Lys-D-Ala-|-D-Ala. Also transpeptidation of peptidyl-alanyl moieties that are N-acyl substituents of D-alanine.. It participates in cell wall biogenesis; peptidoglycan biosynthesis. In terms of biological role, catalyzes cross-linking of the peptidoglycan cell wall at the division septum. Binds penicillin. This chain is Probable peptidoglycan D,D-transpeptidase PbpC, found in Pseudomonas aeruginosa (strain ATCC 15692 / DSM 22644 / CIP 104116 / JCM 14847 / LMG 12228 / 1C / PRS 101 / PAO1).